The primary structure comprises 388 residues: Succinate--CoA ligase [ADP-forming] subunit beta (388 aa).

An ATP-grasp domain is found at 9–244 (KQLFARYGMP…KSQEDEREAQ (236 aa)). Residues Lys-46, 53–55 (GRG), Glu-99, Thr-102, and Glu-107 each bind ATP. Residues Asn-199 and Asp-213 each contribute to the Mg(2+) site. Substrate is bound by residues Asn-264 and 321–323 (GIV).

The protein belongs to the succinate/malate CoA ligase beta subunit family. As to quaternary structure, heterotetramer of two alpha and two beta subunits. The cofactor is Mg(2+).

It carries out the reaction succinate + ATP + CoA = succinyl-CoA + ADP + phosphate. It catalyses the reaction GTP + succinate + CoA = succinyl-CoA + GDP + phosphate. It participates in carbohydrate metabolism; tricarboxylic acid cycle; succinate from succinyl-CoA (ligase route): step 1/1. Succinyl-CoA synthetase functions in the citric acid cycle (TCA), coupling the hydrolysis of succinyl-CoA to the synthesis of either ATP or GTP and thus represents the only step of substrate-level phosphorylation in the TCA. The beta subunit provides nucleotide specificity of the enzyme and binds the substrate succinate, while the binding sites for coenzyme A and phosphate are found in the alpha subunit. In Yersinia enterocolitica serotype O:8 / biotype 1B (strain NCTC 13174 / 8081), this protein is Succinate--CoA ligase [ADP-forming] subunit beta.